The chain runs to 296 residues: Cutinase est1 (296 aa).

An N-terminal signal peptide occupies residues 1 to 35; the sequence is MSVTTPRREASLLSRAVAVAAAAAATVALAAPAQA. The disordered stretch occupies residues 36-57; it reads ANPYERGPNPTESMLEARSGPF. A poly(ethylene terephthalate)-binding site is contributed by Tyr-95. The Nucleophile role is filled by Ser-165. The poly(ethylene terephthalate) site is built by Met-166 and Trp-190. Catalysis depends on charge relay system residues Asp-211 and His-243. A disulfide bridge connects residues Cys-276 and Cys-294.

Belongs to the AB hydrolase superfamily. Monomer.

The protein localises to the secreted. It is found in the periplasm. It carries out the reaction (ethylene terephthalate)(n) + H2O = (ethylene terephthalate)(n-1) + 4-[(2-hydroxyethoxy)carbonyl]benzoate + H(+). The enzyme catalyses a butanoate ester + H2O = an aliphatic alcohol + butanoate + H(+). It catalyses the reaction cutin + H2O = cutin monomers.. Functionally, catalyzes the hydrolysis of cutin, a polyester that forms the structure of plant cuticle. Shows esterase activity towards p-nitrophenol-linked aliphatic esters (pNP-aliphatic esters). Capable of degrading the plastic poly(ethylene terephthalate) (PET), the most abundant polyester plastic in the world. Can also depolymerize the synthetic polyester poly(epsilon-caprolactone) (PCL). The polypeptide is Cutinase est1 (Thermobifida alba (Thermomonospora alba)).